The primary structure comprises 271 residues: 2-amino-3,7-dideoxy-D-threo-hept-6-ulosonate synthase (271 aa).

The active-site Proton acceptor is the Asp33. 1-deoxy-D-threo-hexo-2,5-diulose 6-phosphate-binding positions include 33-37 and 153-155; these read DHGVS and YPR. Residue Tyr153 is the Proton donor of the active site. The Schiff-base intermediate with substrate role is filled by Lys184. Residues 209 to 210 and 236 to 237 contribute to the 1-deoxy-D-threo-hexo-2,5-diulose 6-phosphate site; these read GG and GR.

This sequence belongs to the DeoC/FbaB aldolase family. ADHS subfamily. In terms of assembly, homodecamer.

The catalysed reaction is 1-deoxy-D-threo-hexo-2,5-diulose 6-phosphate + L-aspartate 4-semialdehyde = 2,3-dioxopropyl phosphate + 2-amino-2,3,7-trideoxy-D-lyxo-hept-6-ulosonate. Its function is as follows. Catalyzes a transaldol reaction between 6-deoxy-5-ketofructose 1-phosphate (DKFP) and L-aspartate semialdehyde (ASA) with an elimination of hydroxypyruvaldehyde phosphate to yield 2-amino-3,7-dideoxy-D-threo-hept-6-ulosonate (ADH). Plays a key role in an alternative pathway of the biosynthesis of 3-dehydroquinate (DHQ), which is involved in the canonical pathway for the biosynthesis of aromatic amino acids. The chain is 2-amino-3,7-dideoxy-D-threo-hept-6-ulosonate synthase from Methanococcus aeolicus (strain ATCC BAA-1280 / DSM 17508 / OCM 812 / Nankai-3).